The primary structure comprises 163 residues: ATP synthase subunit b (163 aa).

The chain crosses the membrane as a helical span at residues 13 to 33; that stretch reads SFILFVWFCMKYIWPPIIFAI.

Belongs to the ATPase B chain family. F-type ATPases have 2 components, F(1) - the catalytic core - and F(0) - the membrane proton channel. F(1) has five subunits: alpha(3), beta(3), gamma(1), delta(1), epsilon(1). F(0) has three main subunits: a(1), b(2) and c(10-14). The alpha and beta chains form an alternating ring which encloses part of the gamma chain. F(1) is attached to F(0) by a central stalk formed by the gamma and epsilon chains, while a peripheral stalk is formed by the delta and b chains.

Its subcellular location is the cell membrane. Functionally, f(1)F(0) ATP synthase produces ATP from ADP in the presence of a proton or sodium gradient. F-type ATPases consist of two structural domains, F(1) containing the extramembraneous catalytic core and F(0) containing the membrane proton channel, linked together by a central stalk and a peripheral stalk. During catalysis, ATP synthesis in the catalytic domain of F(1) is coupled via a rotary mechanism of the central stalk subunits to proton translocation. Component of the F(0) channel, it forms part of the peripheral stalk, linking F(1) to F(0). The protein is ATP synthase subunit b of Buchnera aphidicola subsp. Schizaphis graminum (strain Sg).